The chain runs to 220 residues: MASATDSRYGQKESSDQNFDYMFKILIIGNSSVGKTSFLFRYADDSFTPAFVSTVGIDFKVKTIYRNDKRIKLQIWDTAGQERYRTITTAYYRGAMGFILMYDITNEESFNAVQDWSTQIKTYSWDNAQVLLVGNKCDMEDERVVSSERGRQLADHLGFEFFEASAKDNINVKQTFERLVDVICEKMSESLDTADPAVTGAKQGPQLSDQQVPPHQDCAC.

GTP contacts are provided by S31, S32, V33, G34, K35, T36, S37, T48, P49, S53, and T54. T36 serves as a coordination point for Mg(2+). The short motif at 49–58 is the Switch 1 element; that stretch reads PAFVSTVGID. Mg(2+) is bound by residues T54 and D77. Residue G80 participates in GTP binding. The short motif at 80-96 is the Switch 2 element; it reads GQERYRTITTAYYRGAM. T86 bears the Phosphothreonine; by LRRK2 mark. GTP is bound by residues N135, K136, D138, A166, and K167. Phosphoserine is present on residues S188 and S190. The interval 194 to 220 is disordered; that stretch reads ADPAVTGAKQGPQLSDQQVPPHQDCAC. S-geranylgeranyl cysteine attachment occurs at residues C218 and C220. The residue at position 220 (C220) is a Cysteine methyl ester.

It belongs to the small GTPase superfamily. Rab family. As to quaternary structure, interacts with RIMS1 and RIMS2. Interacts with Rabphilin-3A/RPH3A and Rab effector Noc2/RPH3AL. Interacts with SYTL4. Interacts with RAB3IP. Interacts with SGSM1 and SGSM3. Interacts with SYT1. Interacts with MYH9; this interaction is essential for lysosome exocytosis and plasma membrane repair. Interacts with STXBP1; this interaction promotes RAB3A dissociation from the vesicle membrane. Interacts with SNCA. The GTP-bound form interacts with REP15. Interacts with GDI1, GDI2, CHM and CHML; phosphorylation at Thr-86 disrupts these interactions. Interacts with MADD (via uDENN domain); the GTP-bound form is preferred for interaction. Requires Mg(2+) as cofactor. In terms of processing, phosphorylation of Thr-86 in the switch II region by LRRK2 prevents the association of RAB regulatory proteins, including CHM, CHML and RAB GDP dissociation inhibitors GDI1 and GDI2. In terms of tissue distribution, specifically expressed in brain.

The protein localises to the cytoplasm. The protein resides in the cytosol. It is found in the lysosome. It localises to the cytoplasmic vesicle. Its subcellular location is the secretory vesicle. The protein localises to the cell projection. The protein resides in the axon. It is found in the cell membrane. It localises to the presynapse. Its subcellular location is the postsynapse. The enzyme catalyses GTP + H2O = GDP + phosphate + H(+). With respect to regulation, regulated by guanine nucleotide exchange factors (GEFs) including RAB3IL1 and MADD which promote the exchange of bound GDP for free GTP. Regulated by GTPase activating proteins (GAPs) including RAB3GAP1 and TBC1D10B which increase the GTP hydrolysis activity. Inhibited by GDP dissociation inhibitors (GDIs) which prevent Rab-GDP dissociation. Its function is as follows. The small GTPases Rab are key regulators of intracellular membrane trafficking, from the formation of transport vesicles to their fusion with membranes. Rabs cycle between an inactive GDP-bound form and an active GTP-bound form that is able to recruit to membranes different sets of downstream effectors directly responsible for vesicle formation, movement, tethering and fusion. RAB3A plays a central role in regulated exocytosis and secretion. Controls the recruitment, tethering and docking of secretory vesicles to the plasma membrane. Upon stimulation, switches to its active GTP-bound form, cycles to vesicles and recruits effectors such as RIMS1, RIMS2, Rabphilin-3A/RPH3A, RPH3AL or SYTL4 to help the docking of vesicules onto the plasma membrane. Upon GTP hydrolysis by GTPase-activating protein, dissociates from the vesicle membrane allowing the exocytosis to proceed. Stimulates insulin secretion through interaction with RIMS2 or RPH3AL effectors in pancreatic beta cells. Regulates calcium-dependent lysosome exocytosis and plasma membrane repair (PMR) via the interaction with 2 effectors, SYTL4 and myosin-9/MYH9. Acts as a positive regulator of acrosome content secretion in sperm cells by interacting with RIMS1. Also plays a role in the regulation of dopamine release by interacting with synaptotagmin I/SYT. In Homo sapiens (Human), this protein is Ras-related protein Rab-3A.